The following is a 456-amino-acid chain: MGYFRCARAGSFGRRRKMEPSTAARAWALFWLLLPLLGAVCASGPRTLVLLDNLNVRETHSLFFRSLKDRGFELTFKTADDPSLSLIKYGEFLYDNLIIFSPSVEDFGGNINVETISAFIDGGGSVLVAASSDIGDPLRELGSECGIEFDEEKTAVIDHHNYDISDLGQHTLIVADTENLLKAPTIVGKSSLNPILFRGVGMVADPDNPLVLDILTGSSTSYSFFPDKPITQYPHAVGKNTLLIAGLQARNNARVIFSGSLDFFSDSFFNSAVQKAAPGSQRYSQTGNYELAVALSRWVFKEEGVLRVGPVSHHRVGETAPPNAYTVTDLVEYSIVIQQLSNGKWVPFDGDDIQLEFVRIDPFVRTFLKKKGGKYSVQFKLPDVYGVFQFKVDYNRLGYTHLYSSTQVSVRPLQHTQYERFIPSAYPYYASAFSMMLGLFIFSIVFLHMKEKEKSD.

Positions 1–42 are cleaved as a signal peptide; sequence MGYFRCARAGSFGRRRKMEPSTAARAWALFWLLLPLLGAVCA. Residues 43 to 427 are Lumenal-facing; it reads SGPRTLVLLD…YERFIPSAYP (385 aa). Residues 428–447 form a helical membrane-spanning segment; sequence YYASAFSMMLGLFIFSIVFL. Residues 448–456 lie on the Cytoplasmic side of the membrane; the sequence is HMKEKEKSD.

It belongs to the DDOST 48 kDa subunit family. Component of the oligosaccharyltransferase (OST) complex. OST exists in two different complex forms which contain common core subunits RPN1, RPN2, OST48, OST4, DAD1 and TMEM258, either STT3A or STT3B as catalytic subunits, and form-specific accessory subunits. STT3A complex assembly occurs through the formation of 3 subcomplexes. Subcomplex 1 contains RPN1 and TMEM258, subcomplex 2 contains the STT3A-specific subunits STT3A, DC2/OSTC, and KCP2 as well as the core subunit OST4, and subcomplex 3 contains RPN2, DAD1, and OST48. The STT3A complex can form stable complexes with the Sec61 complex or with both the Sec61 and TRAP complexes. Interacts with SMIM22.

The protein resides in the endoplasmic reticulum membrane. The protein operates within protein modification; protein glycosylation. Its function is as follows. Subunit of the oligosaccharyl transferase (OST) complex that catalyzes the initial transfer of a defined glycan (Glc(3)Man(9)GlcNAc(2) in eukaryotes) from the lipid carrier dolichol-pyrophosphate to an asparagine residue within an Asn-X-Ser/Thr consensus motif in nascent polypeptide chains, the first step in protein N-glycosylation. N-glycosylation occurs cotranslationally and the complex associates with the Sec61 complex at the channel-forming translocon complex that mediates protein translocation across the endoplasmic reticulum (ER). All subunits are required for a maximal enzyme activity. Required for the assembly of both SST3A- and SS3B-containing OST complexes. This chain is Dolichyl-diphosphooligosaccharide--protein glycosyltransferase 48 kDa subunit, found in Homo sapiens (Human).